Here is a 91-residue protein sequence, read N- to C-terminus: DNA-directed RNA polymerase subunit omega (91 aa).

It belongs to the RNA polymerase subunit omega family. In terms of assembly, the RNAP catalytic core consists of 2 alpha, 1 beta, 1 beta' and 1 omega subunit. When a sigma factor is associated with the core the holoenzyme is formed, which can initiate transcription.

The enzyme catalyses RNA(n) + a ribonucleoside 5'-triphosphate = RNA(n+1) + diphosphate. Promotes RNA polymerase assembly. Latches the N- and C-terminal regions of the beta' subunit thereby facilitating its interaction with the beta and alpha subunits. The protein is DNA-directed RNA polymerase subunit omega of Psychromonas ingrahamii (strain DSM 17664 / CCUG 51855 / 37).